Here is a 740-residue protein sequence, read N- to C-terminus: DNA ligase (740 aa).

The interval 1–20 (MGPGLTLSGMTEQSSLFPAP) is disordered. Residues 56 to 60 (DAEYD), 105 to 106 (SI), and glutamate 142 contribute to the NAD(+) site. Lysine 144 functions as the N6-AMP-lysine intermediate in the catalytic mechanism. Residues arginine 165, glutamate 201, lysine 322, and lysine 346 each coordinate NAD(+). Zn(2+) is bound by residues cysteine 471, cysteine 474, cysteine 489, and cysteine 495. Residues 654–740 (AATLPLAGMT…RGAPPNAGGG (87 aa)) form the BRCT domain.

The protein belongs to the NAD-dependent DNA ligase family. LigA subfamily. Requires Mg(2+) as cofactor. The cofactor is Mn(2+).

It catalyses the reaction NAD(+) + (deoxyribonucleotide)n-3'-hydroxyl + 5'-phospho-(deoxyribonucleotide)m = (deoxyribonucleotide)n+m + AMP + beta-nicotinamide D-nucleotide.. Its function is as follows. DNA ligase that catalyzes the formation of phosphodiester linkages between 5'-phosphoryl and 3'-hydroxyl groups in double-stranded DNA using NAD as a coenzyme and as the energy source for the reaction. It is essential for DNA replication and repair of damaged DNA. This Acidovorax ebreus (strain TPSY) (Diaphorobacter sp. (strain TPSY)) protein is DNA ligase.